We begin with the raw amino-acid sequence, 89 residues long: Small ribosomal subunit protein uS15 (89 aa).

This sequence belongs to the universal ribosomal protein uS15 family. Part of the 30S ribosomal subunit. Forms a bridge to the 50S subunit in the 70S ribosome, contacting the 23S rRNA.

One of the primary rRNA binding proteins, it binds directly to 16S rRNA where it helps nucleate assembly of the platform of the 30S subunit by binding and bridging several RNA helices of the 16S rRNA. In terms of biological role, forms an intersubunit bridge (bridge B4) with the 23S rRNA of the 50S subunit in the ribosome. This chain is Small ribosomal subunit protein uS15, found in Corynebacterium kroppenstedtii (strain DSM 44385 / JCM 11950 / CIP 105744 / CCUG 35717).